The primary structure comprises 328 residues: D-cysteine desulfhydrase (328 aa).

Lysine 51 bears the N6-(pyridoxal phosphate)lysine mark.

It belongs to the ACC deaminase/D-cysteine desulfhydrase family. As to quaternary structure, homodimer. The cofactor is pyridoxal 5'-phosphate.

The enzyme catalyses D-cysteine + H2O = hydrogen sulfide + pyruvate + NH4(+) + H(+). In terms of biological role, catalyzes the alpha,beta-elimination reaction of D-cysteine and of several D-cysteine derivatives. It could be a defense mechanism against D-cysteine. This chain is D-cysteine desulfhydrase, found in Shigella sonnei (strain Ss046).